A 167-amino-acid polypeptide reads, in one-letter code: Translation initiation factor IF-3 (167 aa).

The protein belongs to the IF-3 family. As to quaternary structure, monomer.

It is found in the cytoplasm. IF-3 binds to the 30S ribosomal subunit and shifts the equilibrium between 70S ribosomes and their 50S and 30S subunits in favor of the free subunits, thus enhancing the availability of 30S subunits on which protein synthesis initiation begins. This is Translation initiation factor IF-3 from Bacillus anthracis.